We begin with the raw amino-acid sequence, 479 residues long: Aldehyde dehydrogenase family 3 member B3 (479 aa).

Active-site residues include Glu-223 and Cys-257. Residue Cys-476 is the site of S-geranylgeranyl cysteine attachment. The propeptide at Thr-477–Leu-479 is removed in mature form.

Belongs to the aldehyde dehydrogenase family. Post-translationally, geranylgeranylation is important for membrane localization and enzyme activity. As to expression, expressed in testis, kidney, small intestine, spleen, white adipose tissue, liver and lung.

Its subcellular location is the cell membrane. The catalysed reaction is an aldehyde + NAD(+) + H2O = a carboxylate + NADH + 2 H(+). The enzyme catalyses hexadecanoate + NADH + 2 H(+) = hexadecanal + NAD(+) + H2O. It catalyses the reaction octanal + NAD(+) + H2O = octanoate + NADH + 2 H(+). In terms of biological role, oxidizes medium and long chain aldehydes into non-toxic fatty acids. This Mus musculus (Mouse) protein is Aldehyde dehydrogenase family 3 member B3.